Here is a 3096-residue protein sequence, read N- to C-terminus: Cilia- and flagella-associated protein 54 (3096 aa).

Residues 1–45 (MAAQGSPSSSPSDDSTTSGSLPELPPTSTATSRSPPESKGSSRSS) show a composition bias toward low complexity. Disordered stretches follow at residues 1–46 (MAAQ…RSSL) and 1248–1267 (SNEQEEMPEEDSSKKSLKTK).

It belongs to the CFAP54 family.

It localises to the cytoplasm. The protein resides in the cytoskeleton. It is found in the cilium axoneme. Its function is as follows. Required for assembly and function of cilia and flagella. The protein is Cilia- and flagella-associated protein 54 of Homo sapiens (Human).